We begin with the raw amino-acid sequence, 427 residues long: Heterogeneous nuclear ribonucleoprotein K (427 aa).

Residues 1–34 (METEQQEETFTNTETNGKRPAEDMEEEQAFKRSR) are disordered. Positions 16–34 (NGKRPAEDMEEEQAFKRSR) are enriched in basic and acidic residues. KH domains are found at residues 39-101 (MVEL…LKKI) and 117-182 (DCEL…IKII). 2 repeat units span residues 51 to 73 (AGAV…NASV) and 56 to 59 (GKGG). A 2 X 22 AA approximate repeats region spans residues 51 to 385 (AGAVIGKGGK…QIRHESGASI (335 aa)). A 5 X 4 AA repeats of G-X-G-G region spans residues 56 to 371 (GKGGKNIKAL…LAGSIIGKGG (316 aa)). The interval 209–246 (YGGFTMMFDDRRGRPVGFPMRGRGGFDRMPPNRGGRPM) is RNA-binding RGG-box. 3 consecutive repeat copies span residues 218–223 (DRRGRP), 230–233 (GRGG), and 240–243 (NRGG). The 2 X 6 AA approximate repeats stretch occupies residues 218–302 (DRRGRPVGFP…LMSYDRRGRP (85 aa)). Residues 221 to 305 (GRPVGFPMRG…YDRRGRPGDR (85 aa)) form a disordered region. Residues 249-258 (SRRDYDDMSP) show a composition bias toward basic and acidic residues. Tandem repeats lie at residues 268-271 (GRGG), 297-302 (DRRGRP), 363-385 (AGSI…GASI), and 368-371 (GKGG). Over residues 295–305 (SYDRRGRPGDR) the composition is skewed to basic and acidic residues. The KH 3 domain occupies 351 to 415 (IITTQVTIPK…DQIQNAQYLL (65 aa)).

Its subcellular location is the cytoplasm. It localises to the nucleus. The protein localises to the nucleoplasm. One of the major pre-mRNA-binding proteins. Binds tenaciously to poly(C) sequences. Likely to play a role in the nuclear metabolism of hnRNAs, particularly for pre-mRNAs that contain cytidine-rich sequences. Can also bind poly(C) single-stranded DNA. May play an important role in p53/TP53 response to DNA damage, acting at the level of both transcription activation and repression. As part of a ribonucleoprotein complex, may negatively regulate the transcription of genes involved in neuronal differentiation. The chain is Heterogeneous nuclear ribonucleoprotein K (HNRNPK) from Gallus gallus (Chicken).